The primary structure comprises 276 residues: Mitochondrial outer membrane protein porin 6 (276 aa).

Belongs to the eukaryotic mitochondrial porin (TC 1.B.8.1) family.

It localises to the mitochondrion outer membrane. Functionally, forms a channel through the mitochondrial outer membrane that allows diffusion of small hydrophilic molecules. The channel adopts an open conformation at low or zero membrane potential and a closed conformation at potentials above 30-40 mV. The open state has a weak anion selectivity whereas the closed state is cation-selective. The protein is Mitochondrial outer membrane protein porin 6 (VDAC6) of Oryza sativa subsp. japonica (Rice).